The sequence spans 189 residues: MILIIDNYDSFTYNLAQCVGELGYDVLVCRNDEIDIPTIKQLNPNKIIISPGPGKPSDSGISLDVISSFSDSIPILGVCLGHQSIGYLNGGRIIKVSEIMHGKTSKIYHNNEDLFKTLPNPFIATRYHSLIIDNLNFPSSLAITAWTENNIIMACRHKDNQMLRGIQFHPESLWTFYGQQLLRNFLEYS.

A Glutamine amidotransferase type-1 domain is found at 1 to 189 (MILIIDNYDS…QLLRNFLEYS (189 aa)). 52 to 54 (GPG) contributes to the L-glutamine binding site. The active-site Nucleophile; for GATase activity is the C79. Residues Q83 and 129–130 (SL) contribute to the L-glutamine site. Residues H169 and E171 contribute to the active site.

In terms of assembly, tetramer of two components I and two components II.

The protein localises to the plastid. It is found in the chloroplast. It catalyses the reaction chorismate + L-glutamine = anthranilate + pyruvate + L-glutamate + H(+). The protein operates within amino-acid biosynthesis; L-tryptophan biosynthesis; L-tryptophan from chorismate: step 1/5. This is Anthranilate synthase component 2 (trpG) from Pyropia yezoensis (Susabi-nori).